A 282-amino-acid chain; its full sequence is Digeranylgeranylglyceryl phosphate synthase (282 aa).

The next 9 helical transmembrane spans lie at 15–35, 36–56, 81–100, 104–121, 131–151, 159–179, 201–221, 222–242, and 260–280; these read VIGAALGAIMGFLVSSQWYLE, LKGILLSALVVGLIAAGGYVI, VNKAKALSIALFIIGIALSI, IYALVIALVTAIGLIYYA, GNLLVATTTALSIFYGGLAFF, IIIPTLYAFFLTLIREIVKGI, KSWRIAKILLVLLLIISPLPF, FIGFNLIYLILLILVFIPFTI, and YLKISAISGIIAFLLGSLPFF.

Belongs to the UbiA prenyltransferase family. DGGGP synthase subfamily. Mg(2+) serves as cofactor. Ca(2+) is required as a cofactor.

Its subcellular location is the cell membrane. It catalyses the reaction sn-3-O-(geranylgeranyl)glycerol 1-phosphate + (2E,6E,10E)-geranylgeranyl diphosphate = 2,3-bis-O-(geranylgeranyl)-sn-glycerol 1-phosphate + diphosphate. It participates in membrane lipid metabolism; glycerophospholipid metabolism. Its activity is regulated as follows. Inhibited by EDTA in vitro. Prenyltransferase that catalyzes the transfer of the geranylgeranyl moiety of geranylgeranyl diphosphate (GGPP) to the C2 hydroxyl of (S)-3-O-geranylgeranylglyceryl phosphate (GGGP). This reaction is the second ether-bond-formation step in the biosynthesis of archaeal membrane lipids. Cannot use other prenyl donors, i.e. farnesyl diphosphate (FPP) and phytyl diphosphate. Moreover, 4-hydroxybenzoate, 1,4-dihydroxy 2-naphthoate, homogentisate, and alpha-glycerophosphate do not function as prenyl acceptor substrates. The chain is Digeranylgeranylglyceryl phosphate synthase (ubiA-2) from Saccharolobus solfataricus (strain ATCC 35092 / DSM 1617 / JCM 11322 / P2) (Sulfolobus solfataricus).